The following is a 373-amino-acid chain: MTAWRDTLGRIGVRAMPGAGGFWRWWQQSLLAWLPQRWQWQLGLSQSRLLLQLDGEALQLLRQRDQTSDTVASLPWPVQPQEVNALLPTALEGLPQHWLLPASHALRRPLRLPAAAAARLQDVARFEIDRQTPFTADQVYFDARVLDVREDGQLDAELVVVPRRMIDGPAGVPEAWSNALSGIDVADARGAPLGVNLLPPARRLRRSDPMQRWNLLLAVAALVLLAVAGWLLLDNRRQAADDLRAQVQANAGRARQVAAERQQLLELVEGAAFFQEQRATRPTSVEIWDELSRRLPSGTYLEKFSVEGGQLQLIGLSKEASSLVRRLEGSPLWHTPSLTGVLQSDAGRNVDRFTITAELAGPDAKEAADAAQR.

Over 1-214 (MTAWRDTLGR…RRSDPMQRWN (214 aa)) the chain is Cytoplasmic. The helical transmembrane segment at 215-233 (LLLAVAALVLLAVAGWLLL) threads the bilayer. The Periplasmic segment spans residues 234 to 373 (DNRRQAADDL…AKEAADAAQR (140 aa)).

The protein belongs to the GSP L family. Type II secretion system is composed of four main components: the outer membrane complex, the inner membrane complex, the cytoplasmic secretion ATPase and the periplasm-spanning pseudopilus. Forms homodimers. Interacts with XpsM/GspM. Interacts with XpsE/GspE and XpsF/GspF.

The protein resides in the cell inner membrane. In terms of biological role, inner membrane component of the type II secretion system required for the energy-dependent secretion of extracellular factors such as proteases and toxins from the periplasm. Plays a role in the complex assembly and recruits XpsM resulting in a stable complex in the inner membrane. Provides thus a link between the energy-providing XpsE protein in the cytoplasm and the rest of the T2SS machinery. In Xanthomonas campestris pv. campestris (strain ATCC 33913 / DSM 3586 / NCPPB 528 / LMG 568 / P 25), this protein is Type II secretion system protein L (pefL).